Here is a 78-residue protein sequence, read N- to C-terminus: MGNLNFVLSPLDQFEVRDLLSINANLLGNFHLSLTNIGLYLTIGIFLILTYSLLATNNNKIIPNNWSISQESIYATVH.

The helical transmembrane segment at 34–54 (LTNIGLYLTIGIFLILTYSLL) threads the bilayer.

The protein belongs to the ATPase A chain family. F-type ATPases have 2 components, CF(1) - the catalytic core - and CF(0) - the membrane proton channel. CF(1) has five subunits: alpha(3), beta(3), gamma(1), delta(1), epsilon(1). CF(0) has three main subunits: a, b and c.

It is found in the mitochondrion inner membrane. Mitochondrial membrane ATP synthase (F(1)F(0) ATP synthase or Complex V) produces ATP from ADP in the presence of a proton gradient across the membrane which is generated by electron transport complexes of the respiratory chain. F-type ATPases consist of two structural domains, F(1) - containing the extramembraneous catalytic core and F(0) - containing the membrane proton channel, linked together by a central stalk and a peripheral stalk. During catalysis, ATP synthesis in the catalytic domain of F(1) is coupled via a rotary mechanism of the central stalk subunits to proton translocation. Key component of the proton channel; it may play a direct role in the translocation of protons across the membrane. This chain is ATP synthase subunit a (atp6), found in Aspergillus amstelodami.